Consider the following 802-residue polypeptide: Putative transcriptional regulator cudA (802 aa).

Disordered stretches follow at residues 1 to 148 (MNQS…PSAI), 154 to 173 (ISNN…NLLL), 381 to 446 (NNIN…NNEN), and 636 to 658 (QPQQ…QQGQ). Positions 25 to 63 (NNNNNGNNGMMMNQQQMQQHVVPHLHHLQQQQQQPQQQQ) are enriched in low complexity. Positions 69–88 (DYSNSPNGTTNGSTMSPNCI) are enriched in polar residues. Positions 89–128 (NTNNNNNNNNNNNNNSNNNNNNNNNASNNLTSNKSSSTNT) are enriched in low complexity. Residues 129–142 (PQIGQLQASPANLT) show a composition bias toward polar residues. The segment covering 381-445 (NNINNNNNIN…CNNNNNNNNE (65 aa)) has biased composition (low complexity).

Expressed in the prestalk cells that constitute the slug tip (pstA cells) and in prespore cells (at protein level). Not expressed in the band of prestalk cells that lies behind the slug tip (pstO cells). Highly expressed in pstO derived papilla cells during culmination.

It localises to the nucleus. The protein resides in the nucleoplasm. In terms of biological role, essential for normal culmination. May function as a transcriptional regulator. The polypeptide is Putative transcriptional regulator cudA (cudA) (Dictyostelium discoideum (Social amoeba)).